Reading from the N-terminus, the 317-residue chain is Serpentine receptor class delta-26 (317 aa).

A run of 7 helical transmembrane segments spans residues 5–25, 38–58, 83–103, 122–142, 176–196, 227–247, and 258–278; these read LLHT…MYLA, AIIT…FFVM, ACYV…IWMI, SLVF…AAWI, ITLI…YAWI, FQVF…AMFG, and LVSI…ILFV.

The protein belongs to the nematode receptor-like protein srd family.

It is found in the membrane. This chain is Serpentine receptor class delta-26 (srd-26), found in Caenorhabditis elegans.